Consider the following 73-residue polypeptide: Large ribosomal subunit protein bL31 (73 aa).

This sequence belongs to the bacterial ribosomal protein bL31 family. Type A subfamily. As to quaternary structure, part of the 50S ribosomal subunit.

Binds the 23S rRNA. The protein is Large ribosomal subunit protein bL31 (rpmE) of Ruegeria pomeroyi (strain ATCC 700808 / DSM 15171 / DSS-3) (Silicibacter pomeroyi).